Consider the following 210-residue polypeptide: Small ribosomal subunit protein bS6 (210 aa).

Residues 99–210 (PLPTKRNTKS…KDTKEVKEEG (112 aa)) form a disordered region. Residues 120–210 (NDTKEVKEAK…KDTKEVKEEG (91 aa)) are compositionally biased toward basic and acidic residues.

The protein belongs to the bacterial ribosomal protein bS6 family.

Functionally, binds together with bS18 to 16S ribosomal RNA. The protein is Small ribosomal subunit protein bS6 of Prochlorococcus marinus (strain SARG / CCMP1375 / SS120).